Here is a 178-residue protein sequence, read N- to C-terminus: Large ribosomal subunit protein uL6 (178 aa).

The protein belongs to the universal ribosomal protein uL6 family. In terms of assembly, part of the 50S ribosomal subunit.

This protein binds to the 23S rRNA, and is important in its secondary structure. It is located near the subunit interface in the base of the L7/L12 stalk, and near the tRNA binding site of the peptidyltransferase center. This is Large ribosomal subunit protein uL6 from Bacillus licheniformis (strain ATCC 14580 / DSM 13 / JCM 2505 / CCUG 7422 / NBRC 12200 / NCIMB 9375 / NCTC 10341 / NRRL NRS-1264 / Gibson 46).